Here is a 539-residue protein sequence, read N- to C-terminus: uncharacterized protein (539 aa).

6–20 (LIIGGGGAAARAAIE) is a binding site for FAD. Catalysis depends on residues His-227 and Arg-243.

Belongs to the FAD-dependent oxidoreductase 2 family. FRD/SDH subfamily. FAD is required as a cofactor.

This is an uncharacterized protein from Methanocaldococcus jannaschii (strain ATCC 43067 / DSM 2661 / JAL-1 / JCM 10045 / NBRC 100440) (Methanococcus jannaschii).